The chain runs to 260 residues: UPF0246 protein Bcen2424_2223 (260 aa).

It belongs to the UPF0246 family.

The sequence is that of UPF0246 protein Bcen2424_2223 from Burkholderia cenocepacia (strain HI2424).